The chain runs to 1458 residues: DNA polymerase alpha catalytic subunit (1458 aa).

Disordered stretches follow at residues 1–25 (MSDS…RKEA) and 89–119 (DLED…SVSK). The segment covering 15-25 (EKTEKSGRKEA) has biased composition (basic and acidic residues). DNA-binding stretches follow at residues 650 to 715 (RINS…VHQI) and 1241 to 1373 (QFRA…ACSK). 8 residues coordinate Zn(2+): C1280, C1283, C1307, C1312, C1345, C1350, C1368, and C1371. A CysA-type zinc finger spans residues 1280–1310 (CPKCGTENIYDNVFDGSGLQIEPGLKRCSKP). A CysB motif motif is present at residues 1345–1371 (CEEKTCQNRTRRLPLSFSRNGPICQAC).

It belongs to the DNA polymerase type-B family. In terms of assembly, the DNA polymerase alpha complex is composed of four subunits: the catalytic subunit POLA1, the regulatory subunit POLA2, and the small and the large primase subunits PRIM1 and PRIM2 respectively. Interacts with PARP1; this interaction functions as part of the control of replication fork progression. Interacts with MCM10 and WDHD1; these interactions recruit the polymerase alpha complex to the pre-replicative complex bound to DNA. Interacts with RPA1; this interaction stabilizes the replicative complex and reduces the misincorporation rate of DNA polymerase alpha by acting as a fidelity clamp.

Its subcellular location is the nucleus. It catalyses the reaction DNA(n) + a 2'-deoxyribonucleoside 5'-triphosphate = DNA(n+1) + diphosphate. Functionally, plays an essential role in the initiation of DNA replication. During the S phase of the cell cycle, the DNA polymerase alpha complex (composed of a catalytic subunit POLA1/p180, a regulatory subunit POLA2/p70 and two primase subunits PRIM1/p49 and PRIM2/p58) is recruited to DNA at the replicative forks via direct interactions with MCM10 and WDHD1. The primase subunit of the polymerase alpha complex initiates DNA synthesis by oligomerising short RNA primers on both leading and lagging strands. These primers are initially extended by the polymerase alpha catalytic subunit and subsequently transferred to polymerase delta and polymerase epsilon for processive synthesis on the lagging and leading strand, respectively. The reason this transfer occurs is because the polymerase alpha has limited processivity and lacks intrinsic 3' exonuclease activity for proofreading error, and therefore is not well suited for replicating long complexes. This Xenopus laevis (African clawed frog) protein is DNA polymerase alpha catalytic subunit (pola1).